The chain runs to 968 residues: Polycystin-2 (968 aa).

Positions 1 to 11 are enriched in polar residues; sequence MVNSSRVQPQQ. Disordered stretches follow at residues 1-28 and 58-181; these read MVNSSRVQPQQPGDAKRPPAPRAPDPGR and RIRQ…LPLE. The Cytoplasmic portion of the chain corresponds to 1–219; that stretch reads MVNSSRVQPQ…STNREKYLKS (219 aa). Residues 62 to 83 show a composition bias toward low complexity; sequence AAARDPPAGAAASPSPPLSSCS. Ser76 and Ser80 each carry phosphoserine. Over residues 95–107 the composition is skewed to acidic residues; the sequence is EAEEEEEEVEGEE. Low complexity predominate over residues 123-139; that stretch reads RRSAASSAVSSVGARSR. An Omega-N-methylarginine modification is found at Arg137. The chain crosses the membrane as a helical span at residues 220–241; sequence VLRELVTYLLFLIVLCILTYGM. At 242 to 468 the chain is on the extracellular side; it reads MSSNVYYYTR…PLKLIRYVTT (227 aa). Asn299 and Asn305 each carry an N-linked (GlcNAc...) asparagine glycan. The N-linked (GlcNAc...) (complex) asparagine glycan is linked to Asn328. The cysteines at positions 331 and 344 are disulfide-linked. N-linked (GlcNAc...) asparagine glycosylation is found at Asn362 and Asn375. The helical transmembrane segment at 469–489 threads the bilayer; it reads FDFFLAACEIIFCFFIFYYVV. Residues 490–505 are Cytoplasmic-facing; the sequence is EEILEIRIHKLHYFRS. A helical membrane pass occupies residues 506-526; it reads FWNCLDVVIVVLSVVAIGINI. At 527–552 the chain is on the extracellular side; the sequence is YRTSNVEVLLQFLEDQNTFPNFEHLA. The helical transmembrane segment at 553 to 573 threads the bilayer; sequence YWQIQFNNIAAVTVFFVWIKL. Residue Gln557 participates in cholesterol binding. The Cytoplasmic portion of the chain corresponds to 574-597; that stretch reads FKFINFNRTMSQLSTTMSRCAKDL. Residues 598-619 traverse the membrane as a helical segment; it reads FGFAIMFFIIFLAYAQLAYLVF. The Extracellular segment spans residues 620–631; it reads GTQVDDFSTFQE. Positions 632 to 646 form an intramembrane region, pore-forming; that stretch reads CIFTQFRIILGDINF. Residue Leu641 participates in Ca(2+) binding. The Selectivity filter motif lies at 641-643; the sequence is LGD. At 647-654 the chain is on the extracellular side; that stretch reads AEIEEANR. Residues 655–675 traverse the membrane as a helical segment; that stretch reads VLGPIYFTTFVFFMFFILLNM. Residues 676–968 are Cytoplasmic-facing; the sequence is FLAIINDTYS…GGNGSSNVHV (293 aa). In terms of domain architecture, EF-hand spans 750 to 785; sequence HTDAEIEAIFTKYDQDGDQELTEHEHQQMRDDLEKE. Residues Asp763, Asp765, Asp767, Glu769, and Glu774 each coordinate Ca(2+). The disordered stretch occupies residues 764–831; the sequence is QDGDQELTEH…HSSRRRGSIS (68 aa). Basic and acidic residues predominate over residues 770-795; that stretch reads LTEHEHQQMRDDLEKEREDLDLDHSS. The span at 796 to 807 shows a compositional bias: low complexity; sequence LPRPMSSRSFPR. A phosphoserine mark is found at Ser801, Ser808, Ser812, and Ser829. The segment at 803 to 822 is linker; the sequence is RSFPRSLDDSEEDDDEDSGH. The tract at residues 810-821 is important for interaction with PACS1 and PACS2; sequence DDSEEDDDEDSG. A coiled-coil region spans residues 833-872; the sequence is GVSYEEFQVLVRRVDRMEHSIGSIVSKIDAVIVKLEIMER. Positions 917 to 968 are disordered; sequence ESDDAASQISHGLGTPVGLNGQPRPRSSRPSSSQSTEGMEGAGGNGSSNVHV. Low complexity predominate over residues 938 to 951; the sequence is QPRPRSSRPSSSQS.

This sequence belongs to the polycystin family. In terms of assembly, homotetramer. Component of the heterotetrameric polycystin channel complex with PKD1; the tetramer contains one PKD1 chain and three PKD2 chains. Isoform 1 interacts with PKD1 while isoform 3 does not. Interacts with PKD1L1; probably forms a Ca(2+) channel. Interacts with CD2AP. Interacts with HAX1. Interacts with NEK8. Part of a complex containing AKAP5, ADCY5, ADCY6 and PDE4C. Interacts (via C-terminus) with TRPV4 (via C-terminus). Interacts (via C-terminal acidic region) with PACS1 and PACS2; these interactions retain the protein in the endoplasmic reticulum and prevent trafficking to the cell membrane. Interacts with TMEM33. Form a heterotetramer with TRPC1 with a 2:2 stoichiometry; has distinct channel properties separate from PKD2 or TRPC1 homomers alone. Interacts with TMEM120A; TMEM120A inhibits PKD2 channel activity through the physical association of PKD2 with TMEM120A. Interacts (via N-terminus) with RYR2; regulates RYR2 channel activity. Phosphorylated. Phosphorylation is important for protein function; a mutant that lacks the N-terminal phosphorylation sites cannot complement a zebrafish pkd2-deficient mutant. PKD-mediated phosphorylation at the C-terminus regulates its function in the release of Ca(2+) stores from the endoplasmic reticulum. Phosphorylation at Ser-812 regulates PKD2 trafficking. Phosphorylation at Ser-76 is required for PKD2 trafficking to or retention at the lateral plasma membrane. Phosphorylation at Ser-801, Ser-812 and Ser-829 regulates PKD2 channel activity. Post-translationally, N-glycosylated. The four subunits in a tetramer probably differ in the extent of glycosylation; simultaneous glycosylation of all experimentally validated sites would probably create steric hindrance. Thus, glycosylation at Asn-305 is not compatible with glycosylation at Asn-328; only one of these two residues is glycosylated at a given time. In terms of processing, sumoylated by SUMO1; sumoylation regulates PKD2 membrane recycling and is necessary for intravascular pressure-induced arterial contractility. In terms of tissue distribution, detected in fetal and adult kidney. Detected at the thick ascending limb of the loop of Henle, at distal tubules, including the distal convoluted tubule and cortical collecting tubules, with weak staining of the collecting duct. Detected on placenta syncytiotrophoblasts (at protein level). Strongly expressed in ovary, fetal and adult kidney, testis, and small intestine. Not detected in peripheral leukocytes.

It is found in the cell projection. The protein localises to the cilium membrane. Its subcellular location is the endoplasmic reticulum membrane. The protein resides in the cell membrane. It localises to the basolateral cell membrane. It is found in the cytoplasmic vesicle membrane. The protein localises to the golgi apparatus. Its subcellular location is the vesicle. The protein resides in the secreted. It localises to the extracellular exosome. It carries out the reaction K(+)(in) = K(+)(out). It catalyses the reaction Na(+)(in) = Na(+)(out). The catalysed reaction is Ca(2+)(in) = Ca(2+)(out). Its activity is regulated as follows. Channel activity is regulated by phosphorylation. Channel activity is regulated by intracellular Ca(2+). At the endoplasmic reticulum membrane (ER), TMEM33 enhances its channel activity. TMEM120A inhibits the channel activity of PKD2, and mediates mechanosensitivity of the PKD2-TMEM120A channel complex. PKD1/PKD2 complex on the plasma membrane is activated by PKD1 N-terminus. Its function is as follows. Forms a nonselective cation channel. Can function as a homotetrameric ion channel or can form heteromer with PKD1. Displays distinct function depending on its subcellular localization and regulation by its binding partners. In primary cilium functions as a cation channel, with a preference for monovalent cations over divalent cations that allows K(+), Na(+) and Ca(2+) influx, with low selectivity for Ca(2+). Involved in fluid-flow mechanosensation by the primary cilium in renal epithelium. In the endoplasmic reticulum, likely functions as a K(+) channel to facilitate Ca(2+) release. The heterotetrameric PKD1/PKD2 channel has higher Ca(2+) permeability than homomeric PKD2 channel and acts as a primarily Ca(2+)-permeable channel. Interacts with and acts as a regulator of a number of other channels, such as TRPV4, TRPC1, IP3R, RYR2, ultimately further affecting intracellular signaling, to modulate intracellular Ca(2+) signaling. Together with TRPV4, forms mechano- and thermosensitive channels in cilium. In cardiomyocytes, PKD2 modulates Ca(2+) release from stimulated RYR2 receptors through direct association. Also involved in left-right axis specification via its role in sensing nodal flow; forms a complex with PKD1L1 in cilia to facilitate flow detection in left-right patterning. Acts as a regulator of cilium length together with PKD1. Mediates systemic blood pressure and contributes to the myogenic response in cerebral arteries though vasoconstriction. This chain is Polycystin-2, found in Homo sapiens (Human).